The chain runs to 100 residues: Large ribosomal subunit protein bL21 (100 aa).

It belongs to the bacterial ribosomal protein bL21 family. In terms of assembly, part of the 50S ribosomal subunit. Contacts protein L20.

In terms of biological role, this protein binds to 23S rRNA in the presence of protein L20. The sequence is that of Large ribosomal subunit protein bL21 from Mycoplasma genitalium (strain ATCC 33530 / DSM 19775 / NCTC 10195 / G37) (Mycoplasmoides genitalium).